The sequence spans 427 residues: Tumor necrosis factor receptor superfamily member 16 (427 aa).

The first 31 residues, 1–31 (MRRAGAACSAMDRLRLLLLLLLLLGVSFGGA), serve as a signal peptide directing secretion. The Extracellular segment spans residues 32-254 (KETCSTGMYT…VVTRGTADNL (223 aa)). TNFR-Cys repeat units lie at residues 34 to 67 (TCST…QTVC), 69 to 110 (PCLD…DAVC), 111 to 149 (RCSY…NTVC), and 151 to 191 (ECPE…DAEC). 12 disulfides stabilise this stretch: C35–C46, C47–C60, C50–C67, C70–C86, C89–C102, C92–C110, C112–C125, C128–C141, C131–C149, C152–C167, C170–C183, and C173–C191. N63 carries an N-linked (GlcNAc...) asparagine glycan. Positions 197-223 (RWITRSTPPEGSDVTTPSTQEPEAPPE) are disordered. The span at 200–217 (TRSTPPEGSDVTTPSTQE) shows a compositional bias: polar residues. The chain crosses the membrane as a helical span at residues 255–275 (IPVYCSILAAVVVGLVAYIAF). Residues 276-427 (KRWNSCKQNK…CSESTATSPV (152 aa)) are Cytoplasmic-facing. 2 stretches are compositionally biased toward polar residues: residues 284 to 294 (NKQGANSRPVN) and 308 to 329 (SGIS…TASG). The tract at residues 284–334 (NKQGANSRPVNQTPPPEGEKLHSDSGISVDSQSLHDQQTHTQTASGQALKG) is disordered. At S314 the chain carries Phosphoserine. Positions 329-344 (GQALKGDGNLYSSLPL) are mediates interaction with KIDINS220. In terms of domain architecture, Death spans 356-421 (GDTWRHLAGE…DIVESLCSES (66 aa)).

As to quaternary structure, homodimer; disulfide-linked. Heterodimer with SORCS2. The extracellular domains of the heterodimer bind NGF. The cytoplasmic region of the heterodimer binds TRIO. NGF binding mediates dissociation of TRIO from the receptor complex. Interacts with TRAF2, TRAF4, TRAF6, PTPN13 and RANBP9. Interacts through TRAF6 with SQSTM1 which bridges NGFR to NTRK1. Interacts with BEX1. Interacts with BEX3. Interacts with KIDINS220 and NTRK1. Can form a ternary complex with NTRK1 and KIDINS220 and this complex is affected by the expression levels of KIDINS220. An increase in KIDINS220 expression leads to a decreased association of NGFR and NTRK1. Interacts (via death domain) with RAB31. Interacts with NTRK2; may regulate the ligand specificity of the NTRK2 receptor. Interacts with LINGO1. Interacts with NRADD. Interacts with MAGED1; the interaction antagonizes the association NGFR:NTRK1. Interacts with RTN4R. Interacts (via death domain) with ARHGDIA and RIPK2. Interacts with BFAR. (Microbial infection) Binds to rabies virus glycoprotein Gs. In terms of processing, N-glycosylated. O-glycosylated. Post-translationally, phosphorylated on serine residues. As to expression, detected in Schwann cells. Detected in embryonic brain, in hippocampus neurons (at protein level). Detected in brain and spinal cord.

It localises to the cell membrane. It is found in the cytoplasm. Its subcellular location is the perikaryon. The protein localises to the cell projection. The protein resides in the growth cone. It localises to the dendritic spine. Low affinity neurotrophin receptor which can bind to mature NGF, BDNF, NTF3, and NTF4. Forms a heterodimeric receptor with SORCS2 that binds the precursor forms of NGF (proNGF), BDNF (proBDNF) and NTF3 (proNT3) with high affinity, and has much lower affinity for mature NGF and BDNF. Plays an important role in differentiation and survival of specific neuronal populations during development. Can mediate cell survival as well as cell death of neural cells. The heterodimeric receptor formed with SORCS2 plays a role in proBDNF-dependent synaptic plasticity, in hippocampal long term depression (LTD) and long term potentiation (LTP). Plays a role in the inactivation of RHOA. Plays a role in the regulation of the translocation of GLUT4 to the cell surface in adipocytes and skeletal muscle cells in response to insulin, probably by regulating RAB31 activity, and thereby contributes to the regulation of insulin-dependent glucose uptake. Necessary for the circadian oscillation of the clock genes BMAL1, PER1, PER2 and NR1D1 in the suprachiasmatic nucleus (SCN) of the brain and in liver and of the genes involved in glucose and lipid metabolism in the liver. Functionally, (Microbial infection) Cell surface receptor for rabies virus glycoprotein Gs. In terms of biological role, does not bind NGF, BDNF, NTF3, and NTF4. In Mus musculus (Mouse), this protein is Tumor necrosis factor receptor superfamily member 16 (Ngfr).